A 344-amino-acid chain; its full sequence is S-adenosylmethionine:tRNA ribosyltransferase-isomerase (344 aa).

The protein belongs to the QueA family. As to quaternary structure, monomer.

The protein resides in the cytoplasm. It catalyses the reaction 7-aminomethyl-7-carbaguanosine(34) in tRNA + S-adenosyl-L-methionine = epoxyqueuosine(34) in tRNA + adenine + L-methionine + 2 H(+). It participates in tRNA modification; tRNA-queuosine biosynthesis. Its function is as follows. Transfers and isomerizes the ribose moiety from AdoMet to the 7-aminomethyl group of 7-deazaguanine (preQ1-tRNA) to give epoxyqueuosine (oQ-tRNA). This Thiobacillus denitrificans (strain ATCC 25259 / T1) protein is S-adenosylmethionine:tRNA ribosyltransferase-isomerase.